Consider the following 325-residue polypeptide: Ribosomal RNA small subunit methyltransferase H (325 aa).

S-adenosyl-L-methionine is bound by residues 42-44 (GGH), Asp-62, Phe-86, Asp-105, and Gln-112.

It belongs to the methyltransferase superfamily. RsmH family.

The protein localises to the cytoplasm. It carries out the reaction cytidine(1402) in 16S rRNA + S-adenosyl-L-methionine = N(4)-methylcytidine(1402) in 16S rRNA + S-adenosyl-L-homocysteine + H(+). Its function is as follows. Specifically methylates the N4 position of cytidine in position 1402 (C1402) of 16S rRNA. In Cupriavidus metallidurans (strain ATCC 43123 / DSM 2839 / NBRC 102507 / CH34) (Ralstonia metallidurans), this protein is Ribosomal RNA small subunit methyltransferase H.